The chain runs to 524 residues: L-tyrosine:2-oxoglutarate aminotransferase atrD (524 aa).

It belongs to the class-I pyridoxal-phosphate-dependent aminotransferase family. Pyridoxal 5'-phosphate serves as cofactor.

The enzyme catalyses L-tyrosine + 2-oxoglutarate = 3-(4-hydroxyphenyl)pyruvate + L-glutamate. It functions in the pathway secondary metabolite biosynthesis. Its function is as follows. The L-tyrosine:2-oxoglutarate aminotransferase atrD and the atromentin synthetase atrA catalyze consecutive steps to turn over L-tyrosine into atromentin, which represents the generic precursor molecule for the entire terphenylquinone and pulvinic acid family of pigments, which are widely distributed secondary metabolites in homobasidiomycetes. The first step is catalyzed by atrD which converts L-tyrosine in to 4-hydroxyphenylpyruvate (4-HPP). Adenylation of two 4-HPP monomers by the atrA adenylation (A) domain, ester bond formation between monomers and atrA, and symmetric C-C-bond formation between two monomers by atrA leads to atromentin. This chain is L-tyrosine:2-oxoglutarate aminotransferase atrD, found in Tapinella panuoides (Oyster rollrim mushroom).